A 1089-amino-acid polypeptide reads, in one-letter code: SUMO-specific isopeptidase USPL1 (1089 aa).

The disordered stretch occupies residues 90 to 128 (LISPDSEDCPTPSKPQKRKRLETNCRNSPLPVHSKKTRS). Residues 215–488 (VQWKNTQALC…ETHIVIWERK (274 aa)) form the USP domain. Residue Cys-224 is the Nucleophile of the active site. The segment at 224-483 (CWLDCILSAL…EVPASETHIV (260 aa)) is SUMO-binding. The Proton acceptor role is filled by His-444. Disordered stretches follow at residues 687–739 (DSQT…KEDQ), 791–817 (ISRRSKRMSRKAKHMEELSPRNSSPPL), 835–868 (LREQEGSRPAPLRHRSPGNESAISPASRGDAAED), and 891–928 (LISSPHREPSLSDHSEPASHCGTPASDQSEPVSHCGSP). Residues 719 to 733 (TASSKTVAARSAQNQ) show a composition bias toward polar residues. Over residues 791–803 (ISRRSKRMSRKAK) the composition is skewed to basic residues. Phosphoserine is present on Ser-894. The span at 895 to 907 (PHREPSLSDHSEP) shows a compositional bias: basic and acidic residues.

Belongs to the peptidase C19 family. As to quaternary structure, interacts with ELL.

It localises to the nucleus. It is found in the cajal body. Functionally, SUMO-specific isopeptidase involved in protein desumoylation. Specifically binds SUMO proteins with a higher affinity for SUMO2 and SUMO3 which it cleaves more efficiently. Also able to process full-length SUMO proteins to their mature forms. Plays a key role in RNA polymerase-II-mediated snRNA transcription in the Cajal bodies. Is a component of complexes that can bind to U snRNA genes. The chain is SUMO-specific isopeptidase USPL1 (Uspl1) from Mus musculus (Mouse).